A 430-amino-acid chain; its full sequence is RNA polymerase-associated protein LEO1 (430 aa).

Polar residues predominate over residues 1-10 (MSSSEGNSDA). Positions 1-128 (MSSSEGNSDA…SRGSLNDLQG (128 aa)) are disordered. Positions 18–30 (KSSTPSSRGSSPD) are enriched in low complexity. A compositionally biased stretch (basic and acidic residues) spans 99-119 (REGKPKESNTRARLSDSDAES). Coiled coils occupy residues 326-347 (TRRENARKEEESLRAHIRRTQM) and 409-429 (EEYRKRKQQQKKQIVTSDEES). The interval 349–430 (RNNFKVRGPR…QIVTSDEESD (82 aa)) is disordered.

Belongs to the LEO1 family. In terms of assembly, component of the PAF1 complex which consists of at least cdc-73, ctr-9, leo-1, pafo-1 and rtfo-1.

The protein localises to the nucleus. The protein resides in the cytoplasm. Functionally, component of the PAF1 complex which is a multifunctional complex involved in transcription initiation via genetic interactions with TATA-binding proteins, elongation and transcription-coupled histone modification. This is RNA polymerase-associated protein LEO1 from Caenorhabditis elegans.